Reading from the N-terminus, the 499-residue chain is Nuclear receptor-binding protein 2 (499 aa).

A disordered region spans residues 1-31 (MAAPEPAPRRGREREREDESEDESDILEESP). The segment covering 7–17 (APRRGRERERE) has biased composition (basic and acidic residues). Positions 18-28 (DESEDESDILE) are enriched in acidic residues. Positions 36 to 304 (QKRREQVNQG…AHNLLFHRVL (269 aa)) constitute a Protein kinase domain. The segment at 396–416 (APPPEEAQKAKTPTPEPFDSE) is disordered. A phosphothreonine mark is found at Thr407 and Thr409.

It belongs to the protein kinase superfamily. Ser/Thr protein kinase family. As to expression, expressed in Purkinje cells of the cerebellum and neurons in the CA3 region of the hippocampus. Also detected in non-neural tissues including mesenchymal layer adjacent to epithelium in developing bronchi of the lung, the epithelium of the stomach as well as cells in the liver.

The protein resides in the cytoplasm. Functionally, may regulate apoptosis of neural progenitor cells during their differentiation. The chain is Nuclear receptor-binding protein 2 from Mus musculus (Mouse).